Here is a 101-residue protein sequence, read N- to C-terminus: Ribonuclease P protein component 1 (101 aa).

The protein belongs to the eukaryotic/archaeal RNase P protein component 1 family. Consists of a catalytic RNA component and at least 4-5 protein subunits.

The protein resides in the cytoplasm. The enzyme catalyses Endonucleolytic cleavage of RNA, removing 5'-extranucleotides from tRNA precursor.. Part of ribonuclease P, a protein complex that generates mature tRNA molecules by cleaving their 5'-ends. The chain is Ribonuclease P protein component 1 from Methanococcoides burtonii (strain DSM 6242 / NBRC 107633 / OCM 468 / ACE-M).